The primary structure comprises 123 residues: Heat-labile enterotoxin IIA, B chain (123 aa).

An N-terminal signal peptide occupies residues 1–19 (MSSKKIIGAFVLMTGILSG). A disulfide bond links Cys-33 and Cys-104.

Heterohexamer of one A chain and of five B chains.

The biological activity of the toxin is produced by the A chain, which activates intracellular adenyl cyclase. The sequence is that of Heat-labile enterotoxin IIA, B chain from Escherichia coli.